The sequence spans 251 residues: Probable aquaporin TIP4-1 (251 aa).

Helical transmembrane passes span 26-46 and 57-77; these read LVLT…AGVP and ALAG…TAGF. The short motif at 85 to 87 is the NPA 1 element; it reads NPA. 3 helical membrane-spanning segments follow: residues 104–124, 144–164, and 170–190; these read ALYV…LRYL, GLVM…ATIL, and VPGF…IAGG. The NPA 2 motif lies at 198–200; the sequence is NPA. The chain crosses the membrane as a helical span at residues 219–239; that stretch reads WLGPLIGGPLAGLVYESLFLV.

It belongs to the MIP/aquaporin (TC 1.A.8) family. TIP (TC 1.A.8.10) subfamily. Expressed in roots, leaves and anthers.

The protein resides in the vacuole membrane. In terms of biological role, aquaporins facilitate the transport of water and small neutral solutes across cell membranes. May be involved in transport from the vacuolar compartment to the cytoplasm. The protein is Probable aquaporin TIP4-1 (TIP4-1) of Oryza sativa subsp. japonica (Rice).